The chain runs to 344 residues: Heat-inducible transcription repressor HrcA (344 aa).

The protein belongs to the HrcA family.

In terms of biological role, negative regulator of class I heat shock genes (grpE-dnaK-dnaJ and groELS operons). Prevents heat-shock induction of these operons. This is Heat-inducible transcription repressor HrcA from Streptococcus pneumoniae (strain 70585).